We begin with the raw amino-acid sequence, 92 residues long: FVPIFTYSELQRMQEKERNRGQKKSLGLQQRSEEVGSLDPTEAAEEEGKEVIKLTAPVEIGMRMNSRQLEKYRAALEGLLSEVLLSTQNAAK.

Positions 12 to 49 are disordered; that stretch reads RMQEKERNRGQKKSLGLQQRSEEVGSLDPTEAAEEEGK.

It belongs to the motilin family.

It is found in the secreted. In terms of biological role, plays an important role in the regulation of interdigestive gastrointestinal motility and indirectly causes rhythmic contraction of duodenal and colonic smooth muscle. In Equus caballus (Horse), this protein is Promotilin (MLN).